The sequence spans 221 residues: Chalcone--flavanone isomerase (221 aa).

Residues Thr50, Asn115, and Thr192 each contribute to the substrate site.

It belongs to the chalcone isomerase family.

The catalysed reaction is a chalcone = a flavanone.. It functions in the pathway secondary metabolite biosynthesis; flavonoid biosynthesis. Its function is as follows. Catalyzes the intramolecular cyclization of bicyclic chalcones into tricyclic (S)-flavanones. Responsible for the isomerization of 4,2',4',6'-tetrahydroxychalcone (also termed chalcone) into naringenin. The chain is Chalcone--flavanone isomerase (CHI) from Phaseolus vulgaris (Kidney bean).